Reading from the N-terminus, the 345-residue chain is Guanine nucleotide-binding protein alpha-4 subunit (345 aa).

A G-alpha domain is found at 30-345 (KDVKLLLLGP…TILSQALEHF (316 aa)). The interval 33–46 (KLLLLGPGESGKST) is G1 motif. GTP-binding positions include 38–45 (GPGESGKS), 171–177 (LRCRVRT), 196–200 (DVGGQ), 265–268 (NKKD), and A320. S45 and T177 together coordinate Mg(2+). A G2 motif region spans residues 169–177 (DVLRCRVRT). Residues 192 to 201 (LKIVDVGGQR) are G3 motif. The tract at residues 261–268 (VLFLNKKD) is G4 motif. Residues 318–323 (TCAVDT) form a G5 motif region.

Belongs to the G-alpha family. G proteins are composed of 3 units; alpha, beta and gamma. The alpha chain contains the guanine nucleotide binding site.

In terms of biological role, guanine nucleotide-binding proteins (G proteins) are involved as modulators or transducers in various transmembrane signaling systems. G alpha-4 plays a role in morphogenesis of the multicellular structure. The sequence is that of Guanine nucleotide-binding protein alpha-4 subunit (gpaD) from Dictyostelium discoideum (Social amoeba).